Reading from the N-terminus, the 277-residue chain is Nudix hydrolase 10 (277 aa).

The region spanning 97–235 (WIPEAESTIP…KNDLFKDIHH (139 aa)) is the Nudix hydrolase domain. A Nudix box motif is present at residues 142-163 (GVVDEGEEIFAAAIREVKEETG). Mg(2+)-binding residues include glutamate 157 and glutamate 161.

Belongs to the Nudix hydrolase family. Requires Mg(2+) as cofactor. Mn(2+) serves as cofactor. As to expression, expressed in roots, stems and, at lower level, leaves.

It catalyses the reaction ADP-D-ribose + H2O = D-ribose 5-phosphate + AMP + 2 H(+). It carries out the reaction NAD(+) + H2O = beta-nicotinamide D-ribonucleotide + AMP + 2 H(+). The enzyme catalyses NADH + H2O = reduced beta-nicotinamide D-ribonucleotide + AMP + 2 H(+). In terms of biological role, may mediate the hydrolysis of some nucleoside diphosphate derivatives. In vitro, uses both ADP-ribose and NADH as substrates; however the relevance of such substrates in vivo is unclear. The sequence is that of Nudix hydrolase 10 (NUDT10) from Arabidopsis thaliana (Mouse-ear cress).